The chain runs to 819 residues: MMLAQKQNFMNQFYKKYHYSIQKYQITDLLFFLFLYPFSTSYGNEQFSFDSRFLPSGYNYSLNSNLPPEGEYLVDIYINKIKKESAIIPFYIKGNKLVPCLSKEKLSSLGININNNDNAECAETSKAGISNISFEFSSLRLFIAVPKNLLSEIDKISSKDIDNGIHALFFNYQVNTRLANNKNRYDYISVSPNINYFSWRLRNRFEFNQNNDKKTWERNYTYLEKSFYDKKLNLIVGESYTSSNVYNNYSFTGISVSTDTDMYTPSEIDYTPEIHGVADSDSQIIVRQGNTIIINESVPAGPFSFPITNLMYTGGQLNVEITDIYGNKKQYTVSNSSLPVMRKAGLMVYNFISGKLTKKNSEDGDFFAQGDINYGTHYNSTLFGGYQFSKNYFNLSTGIGTDLGFSGAWLLNVSRSNFKDKNGYNINLQQNTQLRPFNAGVNFDYIYRKKGYVELSGIGWHGNLYNQLKNSFSLSLSKSLDKYGNFSLDYNKIKYWDNAYDSNSMSIRYFFKFMRAMITTNYSLNKYQSYEKKDKRFSINISLPLTKDYGHISSNYSFSNANTGTATSSVGVNGSFFNDARLNWNIQQNRTTRNNGYTDNTSYIATSYASPYGVFTGSYSGSNKYSSQFYSALGGIVLHSDGVAFTQKAGDTSALVRIDNISDIKIGNTPGVYTGYNGFALIPHLQPFKKNTILINDKGIPDDIALANIKKQVIPSRGAIVKVKFDAKKGNNILFKLTTKDGKTPPLGAIAHEKNGKQINTGIVDDDGMLYMSGLSGAGIINVTWNGKVCSFPFSEKDISSKQLSVVNKQCNRPENSGD.

It belongs to the fimbrial export usher family.

Its subcellular location is the cell outer membrane. Functionally, involved in the export and assembly of C6 fimbrial subunits across the outer membrane. The sequence is that of Outer membrane usher protein CssD (cssD) from Escherichia coli.